Reading from the N-terminus, the 463-residue chain is Lactadherin (463 aa).

The N-terminal stretch at 1–22 (MQVSRVLAALCGMLLCASGLFA) is a signal peptide. EGF-like domains follow at residues 24–61 (SGDF…LVCN) and 64–108 (ERGP…IHCE). 3 cysteine pairs are disulfide-bonded: Cys-28–Cys-39, Cys-33–Cys-49, and Cys-51–Cys-60. N-linked (GlcNAc...) asparagine glycosylation is present at Asn-61. Cystine bridges form between Cys-68-Cys-79, Cys-73-Cys-96, Cys-98-Cys-107, Cys-148-Cys-303, Cys-290-Cys-294, and Cys-308-Cys-463. The short motif at 87-89 (RGD) is the Cell attachment site element. 2 F5/8 type C domains span residues 148–303 (CSTQ…LLGC) and 308–463 (CSEP…LLGC). The N-linked (GlcNAc...) asparagine glycan is linked to Asn-266. Residues Asn-316 and Asn-426 are each glycosylated (N-linked (GlcNAc...) asparagine).

In terms of processing, N-glycosylated. Isoform 1 also exists in both an O-glycosylated and a non-O-glycosylated form. Mammary epithelial cell surfaces and spermatozoan. Isoform 2 is present in brain, heart, kidney and spleen and at low levels in lung, liver, small intestine and testis.

It is found in the membrane. The protein resides in the secreted. It localises to the cytoplasmic vesicle. The protein localises to the secretory vesicle. Its subcellular location is the acrosome membrane. Contributes to phagocytic removal of apoptotic cells in many tissues. Specific ligand for the alpha-v/beta-3 and alpha-v/beta-5 receptors. Also binds to phosphatidylserine-enriched cell surfaces in a receptor-independent manner. Zona pellucida-binding protein which may play a role in gamete interaction. Plays an important role in the maintenance of intestinal epithelial homeostasis and the promotion of mucosal healing. Promotes VEGF-dependent neovascularization. The protein is Lactadherin (Mfge8) of Mus musculus (Mouse).